Reading from the N-terminus, the 88-residue chain is EMBRYO SURROUNDING FACTOR 1-like protein 3 (88 aa).

Positions 1–22 (MKLSQIALICIVIASLFAMHEC) are cleaved as a signal peptide. 3 cysteine pairs are disulfide-bonded: C41–C56, C54–C80, and C57–C67.

The protein belongs to the MEG family. As to expression, expressed in stems, leaves and flowers.

This chain is EMBRYO SURROUNDING FACTOR 1-like protein 3 (ESFL3), found in Arabidopsis thaliana (Mouse-ear cress).